The following is a 245-amino-acid chain: Octanoyltransferase (245 aa).

A BPL/LPL catalytic domain is found at 54 to 242; that stretch reads KTAHEQVWLL…AFEKIFGPTI (189 aa). Residues 93 to 100, 173 to 175, and 186 to 188 each bind substrate; these read RGGEFTYH, AIG, and GVS. C204 acts as the Acyl-thioester intermediate in catalysis.

This sequence belongs to the LipB family.

It localises to the cytoplasm. The catalysed reaction is octanoyl-[ACP] + L-lysyl-[protein] = N(6)-octanoyl-L-lysyl-[protein] + holo-[ACP] + H(+). It participates in protein modification; protein lipoylation via endogenous pathway; protein N(6)-(lipoyl)lysine from octanoyl-[acyl-carrier-protein]: step 1/2. Catalyzes the transfer of endogenously produced octanoic acid from octanoyl-acyl-carrier-protein onto the lipoyl domains of lipoate-dependent enzymes. Lipoyl-ACP can also act as a substrate although octanoyl-ACP is likely to be the physiological substrate. The sequence is that of Octanoyltransferase from Bartonella tribocorum (strain CIP 105476 / IBS 506).